A 362-amino-acid chain; its full sequence is Epoxide hydrolase 4 (362 aa).

A helical; Signal-anchor for type II membrane protein membrane pass occupies residues 17–37 (SLLFWSLVYCYCGLCASIHLL). In terms of domain architecture, AB hydrolase-1 spans 94-211 (PLMLLLHGFP…EYILRHPAQL (118 aa)). Residue Asp-169 is the Nucleophile of the active site. The Proton donor role is filled by Tyr-281. The active-site Proton acceptor is His-336.

Belongs to the AB hydrolase superfamily. Epoxide hydrolase family.

It is found in the membrane. This chain is Epoxide hydrolase 4 (EPHX4), found in Homo sapiens (Human).